The following is a 567-amino-acid chain: TPR repeat-containing protein MJ1428 (567 aa).

TPR repeat units follow at residues 14 to 47 (YEDW…KNTN), 48 to 81 (PIDW…SPSN), 83 to 115 (YFAY…IKNE), 116 to 148 (ELFE…ANSK), 150 to 183 (LNAL…NPSH), 199 to 234 (INSY…DENS), 236 to 268 (ISYY…FNRS), 269 to 301 (LYYA…NSQN), 303 to 335 (YAYF…YLEE), 344 to 379 (LNLY…ENSS), 380 to 412 (RWWY…NPKD), 414 to 446 (STLK…VNSL), and 505 to 538 (AYIY…EMYR).

This Methanocaldococcus jannaschii (strain ATCC 43067 / DSM 2661 / JAL-1 / JCM 10045 / NBRC 100440) (Methanococcus jannaschii) protein is TPR repeat-containing protein MJ1428.